The following is a 302-amino-acid chain: tRNA-cytidine(32) 2-sulfurtransferase (302 aa).

The PP-loop motif signature appears at 44–49 (SGGKDS). [4Fe-4S] cluster-binding residues include cysteine 119, cysteine 122, and cysteine 210.

It belongs to the TtcA family. In terms of assembly, homodimer. Mg(2+) serves as cofactor. Requires [4Fe-4S] cluster as cofactor.

The protein localises to the cytoplasm. The enzyme catalyses cytidine(32) in tRNA + S-sulfanyl-L-cysteinyl-[cysteine desulfurase] + AH2 + ATP = 2-thiocytidine(32) in tRNA + L-cysteinyl-[cysteine desulfurase] + A + AMP + diphosphate + H(+). The protein operates within tRNA modification. Functionally, catalyzes the ATP-dependent 2-thiolation of cytidine in position 32 of tRNA, to form 2-thiocytidine (s(2)C32). The sulfur atoms are provided by the cysteine/cysteine desulfurase (IscS) system. The sequence is that of tRNA-cytidine(32) 2-sulfurtransferase from Teredinibacter turnerae (strain ATCC 39867 / T7901).